Reading from the N-terminus, the 392-residue chain is Leucine aminopeptidase 1 (392 aa).

The first 18 residues, M1–A18, serve as a signal peptide directing secretion. A propeptide spanning residues R19–T82 is cleaved from the precursor. N174 is a glycosylation site (N-linked (GlcNAc...) asparagine). Zn(2+) contacts are provided by H182, D201, E240, and D267. The cysteines at positions 316 and 320 are disulfide-linked. H349 serves as a coordination point for Zn(2+).

It belongs to the peptidase M28 family. M28E subfamily. In terms of assembly, monomer. The cofactor is Zn(2+).

The protein resides in the secreted. In terms of biological role, extracellular aminopeptidase that allows assimilation of proteinaceous substrates. This Fusarium vanettenii (strain ATCC MYA-4622 / CBS 123669 / FGSC 9596 / NRRL 45880 / 77-13-4) (Fusarium solani subsp. pisi) protein is Leucine aminopeptidase 1 (LAP1).